The primary structure comprises 165 residues: ER membrane protein complex subunit 5 (165 aa).

Over 1–3 (MAP) the chain is Cytoplasmic. The helical transmembrane segment at 4-22 (SLWKGLVGIGLFALAHAAF) threads the bilayer. Over 23 to 77 (SAAQHYFPSSGIKWKRKCEFLQSSSFQDKIFRSMYYVYDRSYMRLTEKEDESLPI) the chain is Lumenal. A helical transmembrane segment spans residues 78 to 97 (DIVLQTLLAFAVTCYGIVHI). At 98-165 (AGEFKDMDAT…KLRKLESLRR (68 aa)) the chain is on the cytoplasmic side. Phosphoserine is present on Ser-154.

The protein belongs to the membrane magnesium transporter (TC 1.A.67) family. As to quaternary structure, component of the ER membrane protein complex (EMC).

Its subcellular location is the endoplasmic reticulum membrane. It localises to the golgi apparatus membrane. The protein localises to the early endosome membrane. In terms of biological role, part of the endoplasmic reticulum membrane protein complex (EMC) that enables the energy-independent insertion into endoplasmic reticulum membranes of newly synthesized membrane proteins. Preferentially accommodates proteins with transmembrane domains that are weakly hydrophobic or contain destabilizing features such as charged and aromatic residues. Involved in the cotranslational insertion of multi-pass membrane proteins in which stop-transfer membrane-anchor sequences become ER membrane spanning helices. It is also required for the post-translational insertion of tail-anchored/TA proteins in endoplasmic reticulum membranes. By mediating the proper cotranslational insertion of N-terminal transmembrane domains in an N-exo topology, with translocated N-terminus in the lumen of the ER, controls the topology of multi-pass membrane proteins like the G protein-coupled receptors. By regulating the insertion of various proteins in membranes, it is indirectly involved in many cellular processes. May be involved in Mg(2+) transport. The chain is ER membrane protein complex subunit 5 from Bos taurus (Bovine).